A 197-amino-acid chain; its full sequence is Imidazoleglycerol-phosphate dehydratase (197 aa).

This sequence belongs to the imidazoleglycerol-phosphate dehydratase family.

It is found in the cytoplasm. The enzyme catalyses D-erythro-1-(imidazol-4-yl)glycerol 3-phosphate = 3-(imidazol-4-yl)-2-oxopropyl phosphate + H2O. It functions in the pathway amino-acid biosynthesis; L-histidine biosynthesis; L-histidine from 5-phospho-alpha-D-ribose 1-diphosphate: step 6/9. This is Imidazoleglycerol-phosphate dehydratase from Laribacter hongkongensis (strain HLHK9).